The chain runs to 182 residues: ATP-dependent protease subunit HslV (182 aa).

Threonine 10 is an active-site residue. Na(+) contacts are provided by alanine 164, cysteine 167, and threonine 170.

It belongs to the peptidase T1B family. HslV subfamily. As to quaternary structure, a double ring-shaped homohexamer of HslV is capped on each side by a ring-shaped HslU homohexamer. The assembly of the HslU/HslV complex is dependent on binding of ATP.

The protein localises to the cytoplasm. It carries out the reaction ATP-dependent cleavage of peptide bonds with broad specificity.. Its activity is regulated as follows. Allosterically activated by HslU binding. Functionally, protease subunit of a proteasome-like degradation complex believed to be a general protein degrading machinery. The chain is ATP-dependent protease subunit HslV from Chelativorans sp. (strain BNC1).